The chain runs to 369 residues: DNA replication and repair protein RecF (369 aa).

Position 30–37 (30–37 (GQNGMGKT)) interacts with ATP.

Belongs to the RecF family.

It localises to the cytoplasm. In terms of biological role, the RecF protein is involved in DNA metabolism; it is required for DNA replication and normal SOS inducibility. RecF binds preferentially to single-stranded, linear DNA. It also seems to bind ATP. In Bacteroides thetaiotaomicron (strain ATCC 29148 / DSM 2079 / JCM 5827 / CCUG 10774 / NCTC 10582 / VPI-5482 / E50), this protein is DNA replication and repair protein RecF.